The following is a 297-amino-acid chain: ATP synthase gamma chain (297 aa).

Belongs to the ATPase gamma chain family. As to quaternary structure, F-type ATPases have 2 components, CF(1) - the catalytic core - and CF(0) - the membrane proton channel. CF(1) has five subunits: alpha(3), beta(3), gamma(1), delta(1), epsilon(1). CF(0) has three main subunits: a, b and c.

The protein resides in the cell membrane. Functionally, produces ATP from ADP in the presence of a proton gradient across the membrane. The gamma chain is believed to be important in regulating ATPase activity and the flow of protons through the CF(0) complex. In Arthrobacter sp. (strain FB24), this protein is ATP synthase gamma chain.